A 239-amino-acid polypeptide reads, in one-letter code: Homeobox-leucine zipper protein HOX12 (239 aa).

The segment at 25–65 (ATSGGEQKKARQRRRRKVKPEAAAALAGESGGDEQAKKRRL) is disordered. The segment at residues 58–117 (EQAKKRRLSDEQARFLEMSFKKERKLETPRKVQLAAELGLDAKQVAVWFQNRRARHKSKL) is a DNA-binding region (homeobox). Positions 107-168 (QNRRARHKSK…KLAAVAAATT (62 aa)) form a coiled coil.

The protein belongs to the HD-ZIP homeobox family. Class I subfamily. In terms of tissue distribution, expressed in seedlings, roots, stems, leaf sheaths and panicles.

It is found in the nucleus. Probable transcription factor. In Oryza sativa subsp. japonica (Rice), this protein is Homeobox-leucine zipper protein HOX12 (HOX12).